The sequence spans 414 residues: 2,3-bisphosphoglycerate-independent phosphoglycerate mutase (414 aa).

This sequence belongs to the BPG-independent phosphoglycerate mutase family. A-PGAM subfamily.

The enzyme catalyses (2R)-2-phosphoglycerate = (2R)-3-phosphoglycerate. It functions in the pathway carbohydrate degradation; glycolysis; pyruvate from D-glyceraldehyde 3-phosphate: step 3/5. Functionally, catalyzes the interconversion of 2-phosphoglycerate and 3-phosphoglycerate. This chain is 2,3-bisphosphoglycerate-independent phosphoglycerate mutase, found in Saccharolobus islandicus (strain L.S.2.15 / Lassen #1) (Sulfolobus islandicus).